Consider the following 266-residue polypeptide: Potassium/proton antiporter CemA (266 aa).

3 consecutive transmembrane segments (helical) span residues 46 to 66 (VIVS…INIL), 151 to 171 (FLSF…IIIL), and 226 to 246 (FMSL…KYWI).

It belongs to the CemA family.

The protein resides in the plastid. It is found in the chloroplast inner membrane. It catalyses the reaction K(+)(in) + H(+)(out) = K(+)(out) + H(+)(in). Its function is as follows. Contributes to K(+)/H(+) antiport activity by supporting proton efflux to control proton extrusion and homeostasis in chloroplasts in a light-dependent manner to modulate photosynthesis. Prevents excessive induction of non-photochemical quenching (NPQ) under continuous-light conditions. Indirectly promotes efficient inorganic carbon uptake into chloroplasts. The protein is Potassium/proton antiporter CemA of Chlorella vulgaris (Green alga).